An 884-amino-acid chain; its full sequence is Alanine--tRNA ligase (884 aa).

Zn(2+)-binding residues include histidine 568, histidine 572, cysteine 670, and histidine 674.

Belongs to the class-II aminoacyl-tRNA synthetase family. Zn(2+) is required as a cofactor.

The protein localises to the cytoplasm. It catalyses the reaction tRNA(Ala) + L-alanine + ATP = L-alanyl-tRNA(Ala) + AMP + diphosphate. In terms of biological role, catalyzes the attachment of alanine to tRNA(Ala) in a two-step reaction: alanine is first activated by ATP to form Ala-AMP and then transferred to the acceptor end of tRNA(Ala). Also edits incorrectly charged Ser-tRNA(Ala) and Gly-tRNA(Ala) via its editing domain. This chain is Alanine--tRNA ligase, found in Synechococcus sp. (strain JA-2-3B'a(2-13)) (Cyanobacteria bacterium Yellowstone B-Prime).